Consider the following 422-residue polypeptide: Glutamyl-tRNA reductase (422 aa).

Substrate-binding positions include 49 to 52 (TCNR), Ser-108, 113 to 115 (EPQ), and Gln-119. Cys-50 serves as the catalytic Nucleophile. 188–193 (GAGQTI) is a binding site for NADP(+).

Belongs to the glutamyl-tRNA reductase family. In terms of assembly, homodimer.

The enzyme catalyses (S)-4-amino-5-oxopentanoate + tRNA(Glu) + NADP(+) = L-glutamyl-tRNA(Glu) + NADPH + H(+). It functions in the pathway porphyrin-containing compound metabolism; protoporphyrin-IX biosynthesis; 5-aminolevulinate from L-glutamyl-tRNA(Glu): step 1/2. Catalyzes the NADPH-dependent reduction of glutamyl-tRNA(Glu) to glutamate 1-semialdehyde (GSA). In Marinomonas sp. (strain MWYL1), this protein is Glutamyl-tRNA reductase.